The primary structure comprises 354 residues: Photosystem II protein D1 3 (354 aa).

3 helical membrane-spanning segments follow: residues 29-46, 118-133, and 142-156; these read YIGW…TATT, HFLI…EWEL, and WIAV…AATA. His118 lines the chlorophyll a pocket. Tyr126 is a pheophytin a binding site. [CaMn4O5] cluster contacts are provided by Asp170 and Glu189. Residues 197–218 traverse the membrane as a helical segment; the sequence is FHQLGVAGVFGGALFSAMHGSL. His198 contacts chlorophyll a. A quinone is bound by residues His215 and 264 to 265; that span reads SF. His215 is a binding site for Fe cation. His272 is a binding site for Fe cation. A helical membrane pass occupies residues 274–288; it reads FLAAWPVIGIWFTAL. Positions 332, 333, 342, and 344 each coordinate [CaMn4O5] cluster. A propeptide spanning residues 345–354 is cleaved from the precursor; that stretch reads AVEVAPAVRG.

The protein belongs to the reaction center PufL/M/PsbA/D family. As to quaternary structure, PSII is composed of 1 copy each of membrane proteins PsbA, PsbB, PsbC, PsbD, PsbE, PsbF, PsbH, PsbI, PsbJ, PsbK, PsbL, PsbM, PsbT, PsbX, PsbY, PsbZ, Psb30/Ycf12, peripheral proteins PsbO, CyanoQ (PsbQ), PsbU, PsbV and a large number of cofactors. It forms dimeric complexes. The cofactor is The D1/D2 heterodimer binds P680, chlorophylls that are the primary electron donor of PSII, and subsequent electron acceptors. It shares a non-heme iron and each subunit binds pheophytin, quinone, additional chlorophylls, carotenoids and lipids. D1 provides most of the ligands for the Mn4-Ca-O5 cluster of the oxygen-evolving complex (OEC). There is also a Cl(-1) ion associated with D1 and D2, which is required for oxygen evolution. The PSII complex binds additional chlorophylls, carotenoids and specific lipids.. In terms of processing, tyr-161 forms a radical intermediate that is referred to as redox-active TyrZ, YZ or Y-Z. Post-translationally, C-terminally processed by CtpA; processing is essential to allow assembly of the oxygen-evolving complex and thus photosynthetic growth.

The protein resides in the cellular thylakoid membrane. It catalyses the reaction 2 a plastoquinone + 4 hnu + 2 H2O = 2 a plastoquinol + O2. In terms of biological role, photosystem II (PSII) is a light-driven water:plastoquinone oxidoreductase that uses light energy to abstract electrons from H(2)O, generating O(2) and a proton gradient subsequently used for ATP formation. It consists of a core antenna complex that captures photons, and an electron transfer chain that converts photonic excitation into a charge separation. The D1/D2 (PsbA/PsbD) reaction center heterodimer binds P680, the primary electron donor of PSII as well as several subsequent electron acceptors. This Synechococcus sp. (strain JA-3-3Ab) (Cyanobacteria bacterium Yellowstone A-Prime) protein is Photosystem II protein D1 3.